An 807-amino-acid chain; its full sequence is Leucine--tRNA ligase (807 aa).

Positions 40-51 (PYPSGTGLHVGH) match the 'HIGH' region motif. The 'KMSKS' region motif lies at 576 to 580 (KMSKS). Lysine 579 is a binding site for ATP.

This sequence belongs to the class-I aminoacyl-tRNA synthetase family.

The protein localises to the cytoplasm. It catalyses the reaction tRNA(Leu) + L-leucine + ATP = L-leucyl-tRNA(Leu) + AMP + diphosphate. This is Leucine--tRNA ligase from Pelodictyon phaeoclathratiforme (strain DSM 5477 / BU-1).